The primary structure comprises 163 residues: SsrA-binding protein (163 aa).

This sequence belongs to the SmpB family.

It localises to the cytoplasm. Functionally, required for rescue of stalled ribosomes mediated by trans-translation. Binds to transfer-messenger RNA (tmRNA), required for stable association of tmRNA with ribosomes. tmRNA and SmpB together mimic tRNA shape, replacing the anticodon stem-loop with SmpB. tmRNA is encoded by the ssrA gene; the 2 termini fold to resemble tRNA(Ala) and it encodes a 'tag peptide', a short internal open reading frame. During trans-translation Ala-aminoacylated tmRNA acts like a tRNA, entering the A-site of stalled ribosomes, displacing the stalled mRNA. The ribosome then switches to translate the ORF on the tmRNA; the nascent peptide is terminated with the 'tag peptide' encoded by the tmRNA and targeted for degradation. The ribosome is freed to recommence translation, which seems to be the essential function of trans-translation. The sequence is that of SsrA-binding protein from Buchnera aphidicola subsp. Schizaphis graminum (strain Sg).